The following is a 128-amino-acid chain: S-adenosylmethionine decarboxylase proenzyme (128 aa).

S61 (schiff-base intermediate with substrate; via pyruvic acid) is an active-site residue. S61 carries the pyruvic acid (Ser); by autocatalysis modification. The active-site Proton acceptor; for processing activity is H66. C81 functions as the Proton donor; for catalytic activity in the catalytic mechanism.

It belongs to the prokaryotic AdoMetDC family. Type 1 subfamily. As to quaternary structure, heterotetramer of two alpha and two beta chains arranged as a dimer of alpha/beta heterodimers. Pyruvate is required as a cofactor. Is synthesized initially as an inactive proenzyme. Formation of the active enzyme involves a self-maturation process in which the active site pyruvoyl group is generated from an internal serine residue via an autocatalytic post-translational modification. Two non-identical subunits are generated from the proenzyme in this reaction, and the pyruvate is formed at the N-terminus of the alpha chain, which is derived from the carboxyl end of the proenzyme. The post-translation cleavage follows an unusual pathway, termed non-hydrolytic serinolysis, in which the side chain hydroxyl group of the serine supplies its oxygen atom to form the C-terminus of the beta chain, while the remainder of the serine residue undergoes an oxidative deamination to produce ammonia and the pyruvoyl group blocking the N-terminus of the alpha chain.

It carries out the reaction S-adenosyl-L-methionine + H(+) = S-adenosyl 3-(methylsulfanyl)propylamine + CO2. It functions in the pathway amine and polyamine biosynthesis; S-adenosylmethioninamine biosynthesis; S-adenosylmethioninamine from S-adenosyl-L-methionine: step 1/1. Its function is as follows. Catalyzes the decarboxylation of S-adenosylmethionine to S-adenosylmethioninamine (dcAdoMet), the propylamine donor required for the synthesis of the polyamines spermine and spermidine from the diamine putrescine. The protein is S-adenosylmethionine decarboxylase proenzyme of Synechococcus sp. (strain WH7803).